The sequence spans 145 residues: Deoxyuridine 5'-triphosphate nucleotidohydrolase (145 aa).

Substrate-binding positions include 63-65 (RSG), Asn-76, and 80-82 (TID).

It belongs to the dUTPase family. Mg(2+) serves as cofactor.

It catalyses the reaction dUTP + H2O = dUMP + diphosphate + H(+). It functions in the pathway pyrimidine metabolism; dUMP biosynthesis; dUMP from dCTP (dUTP route): step 2/2. This enzyme is involved in nucleotide metabolism: it produces dUMP, the immediate precursor of thymidine nucleotides and it decreases the intracellular concentration of dUTP so that uracil cannot be incorporated into DNA. In Chlamydia pneumoniae (Chlamydophila pneumoniae), this protein is Deoxyuridine 5'-triphosphate nucleotidohydrolase.